The chain runs to 506 residues: Deoxyguanosinetriphosphate triphosphohydrolase (506 aa).

The region spanning arginine 66–cysteine 274 is the HD domain.

This sequence belongs to the dGTPase family. Type 1 subfamily. Homotetramer. Mg(2+) is required as a cofactor.

It carries out the reaction dGTP + H2O = 2'-deoxyguanosine + triphosphate + H(+). Its function is as follows. dGTPase preferentially hydrolyzes dGTP over the other canonical NTPs. In Yersinia pestis bv. Antiqua (strain Antiqua), this protein is Deoxyguanosinetriphosphate triphosphohydrolase.